The sequence spans 640 residues: Preterminal protein (640 aa).

The segment at 232–257 (PSQEGEGEERENPDRASSRPRPQETV) is disordered. The Nuclear localization signal motif lies at 351–360 (RLPVRRRRRR). O-(5'-phospho-DNA)-serine is present on S549. Residues 614 to 640 (GADVPLPAMPPGPEPPLPPGARPRHRF) form a disordered region. Residues 620 to 634 (PAMPPGPEPPLPPGA) are compositionally biased toward pro residues.

This sequence belongs to the adenoviridae terminal protein family. As to quaternary structure, heterodimer with the polymerase; this heterodimer binds to bp 9 to 18 of the genome. Interacts with host POU2F1; POU2F1 binds to the auxiliary sequences in the inverted terminal repeats and tethers the pTP-POL heterodimer to the origin DNA thereby participating in the assembly of the pre-initiation complex (POL-TP-DBP-NFIA-POU2F1). Preterminal protein is used to replicate viral genome, upon genomic encapsidation it is processed first into iTP and finally into TP by adenovirus protease.

Its subcellular location is the host nucleus matrix. In terms of biological role, protein covalently bound to the viral DNA that acts as a primer for viral genomic replication by DNA strand displacement. Assembles on the viral origin of replication in an initiation complex with viral polymerase, DBP, host NFIA and host POU2F1/OCT1. During initiation, the polymerase covalently couples the first dCTP with Ser-580 of pTP. The terminal protein stimulates the template activity over 20 fold compared to protein-free templates. Neo-synthesized viral genomes are linked to two preterminal proteins, one for each 5' end. These new genomes are encapsidated in the nucleus, and during capsid maturation by viral protease, preterminal protein is first cleaved into intermediary (iTP), then into mature TP. May play a role in host nuclear matrix localization of genomic DNA. This chain is Preterminal protein, found in Human adenovirus B serotype 7 (HAdV-7).